A 353-amino-acid polypeptide reads, in one-letter code: Guanine nucleotide-binding protein G(q) subunit alpha (353 aa).

2 S-palmitoyl cysteine lipidation sites follow: Cys3 and Cys4. In terms of domain architecture, G-alpha spans 32–353 (RELKLLLLGT…QLNLKEYNLV (322 aa)). The G1 motif stretch occupies residues 35–48 (KLLLLGTGESGKST). Residues 40-47 (GTGESGKS), 174-180 (LRVRAPT), 199-203 (DVGGQ), 268-271 (NKKD), and Ala325 contribute to the GTP site. Residues Ser47 and Thr180 each coordinate Mg(2+). Positions 172–180 (DILRVRAPT) are G2 motif. Residues 195–204 (FRMVDVGGQR) form a G3 motif region. Positions 264–271 (ILFLNKKD) are G4 motif. The G5 motif stretch occupies residues 323–328 (TCATDT).

It belongs to the G-alpha family. G(q) subfamily. As to quaternary structure, g proteins are composed of 3 units; alpha, beta and gamma. The alpha chain contains the guanine nucleotide binding site.

In terms of biological role, guanine nucleotide-binding proteins (G proteins) are involved as modulators or transducers in various transmembrane signaling systems. This Homarus americanus (American lobster) protein is Guanine nucleotide-binding protein G(q) subunit alpha.